The sequence spans 25 residues: Small ribosomal subunit protein eS32B (25 aa).

The disordered stretch occupies residues 1–25; it reads MRAKWRKKRTRRLKRKRRKVRARSK.

This sequence belongs to the eukaryotic ribosomal protein eS32 family. In terms of assembly, component of the small ribosomal subunit (SSU). Mature yeast ribosomes consist of a small (40S) and a large (60S) subunit. The 40S small subunit contains 1 molecule of ribosomal RNA (18S rRNA) and 33 different proteins (encoded by 57 genes). The large 60S subunit contains 3 rRNA molecules (25S, 5.8S and 5S rRNA) and 46 different proteins (encoded by 81 genes).

The protein localises to the cytoplasm. Component of the ribosome, a large ribonucleoprotein complex responsible for the synthesis of proteins in the cell. The small ribosomal subunit (SSU) binds messenger RNAs (mRNAs) and translates the encoded message by selecting cognate aminoacyl-transfer RNA (tRNA) molecules. The large subunit (LSU) contains the ribosomal catalytic site termed the peptidyl transferase center (PTC), which catalyzes the formation of peptide bonds, thereby polymerizing the amino acids delivered by tRNAs into a polypeptide chain. The nascent polypeptides leave the ribosome through a tunnel in the LSU and interact with protein factors that function in enzymatic processing, targeting, and the membrane insertion of nascent chains at the exit of the ribosomal tunnel. The protein is Small ribosomal subunit protein eS32B of Saccharomyces cerevisiae (strain ATCC 204508 / S288c) (Baker's yeast).